The primary structure comprises 176 residues: Peptide deformylase (176 aa).

Fe cation contacts are provided by cysteine 94 and histidine 136. Glutamate 137 is a catalytic residue. Histidine 140 serves as a coordination point for Fe cation.

The protein belongs to the polypeptide deformylase family. Fe(2+) is required as a cofactor.

It catalyses the reaction N-terminal N-formyl-L-methionyl-[peptide] + H2O = N-terminal L-methionyl-[peptide] + formate. Removes the formyl group from the N-terminal Met of newly synthesized proteins. Requires at least a dipeptide for an efficient rate of reaction. N-terminal L-methionine is a prerequisite for activity but the enzyme has broad specificity at other positions. In Bartonella henselae (strain ATCC 49882 / DSM 28221 / CCUG 30454 / Houston 1) (Rochalimaea henselae), this protein is Peptide deformylase.